The sequence spans 628 residues: tRNA uridine 5-carboxymethylaminomethyl modification enzyme MnmG 1 (628 aa).

Residue glycine 11 to glycine 16 coordinates FAD. Glycine 280 to phenylalanine 294 contributes to the NAD(+) binding site.

This sequence belongs to the MnmG family. In terms of assembly, homodimer. Heterotetramer of two MnmE and two MnmG subunits. FAD is required as a cofactor.

The protein localises to the cytoplasm. NAD-binding protein involved in the addition of a carboxymethylaminomethyl (cmnm) group at the wobble position (U34) of certain tRNAs, forming tRNA-cmnm(5)s(2)U34. The sequence is that of tRNA uridine 5-carboxymethylaminomethyl modification enzyme MnmG 1 from Fusobacterium nucleatum subsp. nucleatum (strain ATCC 25586 / DSM 15643 / BCRC 10681 / CIP 101130 / JCM 8532 / KCTC 2640 / LMG 13131 / VPI 4355).